We begin with the raw amino-acid sequence, 24 residues long: Cytochrome c oxidase subunit 7A2, mitochondrial (24 aa).

The segment covering 1 to 13 (FENKVPEKQKLFQ) has biased composition (basic and acidic residues). The segment at 1–24 (FENKVPEKQKLFQEDNGIPVHLKG) is disordered. An N6-acetyllysine modification is found at lysine 10.

The protein belongs to the cytochrome c oxidase VIIa family. In terms of assembly, component of the cytochrome c oxidase (complex IV, CIV), a multisubunit enzyme composed of 14 subunits. The complex is composed of a catalytic core of 3 subunits MT-CO1, MT-CO2 and MT-CO3, encoded in the mitochondrial DNA, and 11 supernumerary subunits COX4I, COX5A, COX5B, COX6A, COX6B, COX6C, COX7A, COX7B, COX7C, COX8 and NDUFA4, which are encoded in the nuclear genome. The complex exists as a monomer or a dimer and forms supercomplexes (SCs) in the inner mitochondrial membrane with NADH-ubiquinone oxidoreductase (complex I, CI) and ubiquinol-cytochrome c oxidoreductase (cytochrome b-c1 complex, complex III, CIII), resulting in different assemblies (supercomplex SCI(1)III(2)IV(1) and megacomplex MCI(2)III(2)IV(2)). Interacts with PET100.

The protein resides in the mitochondrion inner membrane. Its pathway is energy metabolism; oxidative phosphorylation. Its function is as follows. Component of the cytochrome c oxidase, the last enzyme in the mitochondrial electron transport chain which drives oxidative phosphorylation. The respiratory chain contains 3 multisubunit complexes succinate dehydrogenase (complex II, CII), ubiquinol-cytochrome c oxidoreductase (cytochrome b-c1 complex, complex III, CIII) and cytochrome c oxidase (complex IV, CIV), that cooperate to transfer electrons derived from NADH and succinate to molecular oxygen, creating an electrochemical gradient over the inner membrane that drives transmembrane transport and the ATP synthase. Cytochrome c oxidase is the component of the respiratory chain that catalyzes the reduction of oxygen to water. Electrons originating from reduced cytochrome c in the intermembrane space (IMS) are transferred via the dinuclear copper A center (CU(A)) of subunit 2 and heme A of subunit 1 to the active site in subunit 1, a binuclear center (BNC) formed by heme A3 and copper B (CU(B)). The BNC reduces molecular oxygen to 2 water molecules using 4 electrons from cytochrome c in the IMS and 4 protons from the mitochondrial matrix. In Ovis aries (Sheep), this protein is Cytochrome c oxidase subunit 7A2, mitochondrial (COX7A2).